We begin with the raw amino-acid sequence, 406 residues long: NADH-quinone oxidoreductase subunit D (406 aa).

Belongs to the complex I 49 kDa subunit family. NDH-1 is composed of 14 different subunits. Subunits NuoB, C, D, E, F, and G constitute the peripheral sector of the complex.

The protein resides in the cell inner membrane. It carries out the reaction a quinone + NADH + 5 H(+)(in) = a quinol + NAD(+) + 4 H(+)(out). Functionally, NDH-1 shuttles electrons from NADH, via FMN and iron-sulfur (Fe-S) centers, to quinones in the respiratory chain. The immediate electron acceptor for the enzyme in this species is believed to be ubiquinone. Couples the redox reaction to proton translocation (for every two electrons transferred, four hydrogen ions are translocated across the cytoplasmic membrane), and thus conserves the redox energy in a proton gradient. This Acidiphilium cryptum (strain JF-5) protein is NADH-quinone oxidoreductase subunit D.